The chain runs to 98 residues: NADH-ubiquinone oxidoreductase chain 4L (98 aa).

Transmembrane regions (helical) follow at residues 1 to 21 (MTSI…GVLV), 28 to 48 (STLL…ALLI), and 59 to 79 (APLI…ALLV).

This sequence belongs to the complex I subunit 4L family. In terms of assembly, core subunit of respiratory chain NADH dehydrogenase (Complex I) which is composed of 45 different subunits.

The protein resides in the mitochondrion inner membrane. The catalysed reaction is a ubiquinone + NADH + 5 H(+)(in) = a ubiquinol + NAD(+) + 4 H(+)(out). In terms of biological role, core subunit of the mitochondrial membrane respiratory chain NADH dehydrogenase (Complex I) which catalyzes electron transfer from NADH through the respiratory chain, using ubiquinone as an electron acceptor. Part of the enzyme membrane arm which is embedded in the lipid bilayer and involved in proton translocation. The sequence is that of NADH-ubiquinone oxidoreductase chain 4L (MT-ND4L) from Dactylopsila trivirgata (Striped possum).